The sequence spans 233 residues: Adenosine 5'-phosphosulfate reductase (233 aa).

[4Fe-4S] cluster contacts are provided by C120, C121, C203, and C206. C229 acts as the Nucleophile; cysteine thiosulfonate intermediate in catalysis.

The protein belongs to the PAPS reductase family. CysH subfamily. Requires [4Fe-4S] cluster as cofactor.

The protein localises to the cytoplasm. The catalysed reaction is [thioredoxin]-disulfide + sulfite + AMP + 2 H(+) = adenosine 5'-phosphosulfate + [thioredoxin]-dithiol. It functions in the pathway sulfur metabolism; hydrogen sulfide biosynthesis; sulfite from sulfate. Its function is as follows. Catalyzes the formation of sulfite from adenosine 5'-phosphosulfate (APS) using thioredoxin as an electron donor. The sequence is that of Adenosine 5'-phosphosulfate reductase from Lysinibacillus sphaericus (strain C3-41).